Consider the following 463-residue polypeptide: Sodium-coupled neutral amino acid transporter 7 (463 aa).

S28 bears the Phosphoserine mark. The next 11 membrane-spanning stretches (helical) occupy residues 56-76, 82-102, 130-150, 179-199, 206-226, 240-260, 283-303, 320-340, 372-392, 396-416, and 429-449; these read AIFI…PAAF, VAAG…GLVI, LCEV…LIII, FTIS…REIG, FLSV…YIWP, ASWI…QCHV, AAMV…FLTF, MAVA…YPIL, VLQT…IPDI, ISVI…LCLI, and ASWW…AFIF.

The protein belongs to the amino acid/polyamine transporter 2 family. In terms of assembly, interacts with the mTORC1 complex; this interaction mediates the recruitment of mTORC1 to the lysosome and its subsequent activation.

Its subcellular location is the lysosome membrane. The protein localises to the cell projection. It is found in the axon. The catalysed reaction is L-asparagine(in) + Na(+)(in) = L-asparagine(out) + Na(+)(out). The enzyme catalyses L-glutamine(in) + Na(+)(in) = L-glutamine(out) + Na(+)(out). In terms of biological role, symporter that selectively cotransports sodium ions and amino acids, such as L-glutamine and L-asparagine from the lysosome into the cytoplasm and may participates in mTORC1 activation. The transport activity requires an acidic lysosomal lumen. The sequence is that of Sodium-coupled neutral amino acid transporter 7 from Bos taurus (Bovine).